Consider the following 20-residue polypeptide: Dahlein-5.3 (20 aa).

As to expression, expressed by the skin dorsal glands.

It localises to the secreted. Its function is as follows. Has no antimicrobial activity. Strongly inhibits the formation of NO by neuronal nitric oxide synthase at micromolar concentrations. The sequence is that of Dahlein-5.3 from Ranoidea dahlii (Dahl's aquatic frog).